The sequence spans 56 residues: Prokaryotic ubiquitin-like protein UBact (56 aa).

A disordered region spans residues 1–56; sequence MPDQAQKTRPVGPGPSGGGEGPGSPKVEKPNTEELLKRMRKVDPDQAKRYRQRTGQ. A compositionally biased stretch (basic and acidic residues) spans 26-48; it reads KVEKPNTEELLKRMRKVDPDQAK. At Gln56 the chain carries Deamidated glutamine. Gln56 is covalently cross-linked (Isoglutamyl lysine isopeptide (Gln-Lys) (interchain with K-? in acceptor proteins)).

Belongs to the ubiquitin-like protein UBact family. May be modified by deamidation of its C-terminal glutamine to glutamate by the adjacently encoded deamidase. This could be a prerequisite to the subsequent conjugation, as shown in the other prokaryotic ubiquitin-like protein Pup.

Its function is as follows. May function as a protein modifier covalently attached to lysine residues of substrate proteins. This may serve to target the modified proteins for degradation by proteasomes. This chain is Prokaryotic ubiquitin-like protein UBact, found in Pedosphaera parvula (strain Ellin514).